The following is a 223-amino-acid chain: Ribose-5-phosphate isomerase A (223 aa).

Residues 32-35 (TGST), 85-88 (DGAD), and 98-101 (KGGG) each bind substrate. Catalysis depends on Glu-107, which acts as the Proton acceptor. Lys-125 is a binding site for substrate.

The protein belongs to the ribose 5-phosphate isomerase family. Homodimer.

The enzyme catalyses aldehydo-D-ribose 5-phosphate = D-ribulose 5-phosphate. It functions in the pathway carbohydrate degradation; pentose phosphate pathway; D-ribose 5-phosphate from D-ribulose 5-phosphate (non-oxidative stage): step 1/1. In terms of biological role, catalyzes the reversible conversion of ribose-5-phosphate to ribulose 5-phosphate. The polypeptide is Ribose-5-phosphate isomerase A (Pseudomonas fluorescens (strain ATCC BAA-477 / NRRL B-23932 / Pf-5)).